The following is a 265-amino-acid chain: Orotidine 5'-phosphate decarboxylase (265 aa).

Substrate-binding positions include aspartate 38, 60–62, 91–100, tyrosine 213, and arginine 232; these read KTH and DRKFADIGNT. Lysine 93 (proton donor) is an active-site residue.

The protein belongs to the OMP decarboxylase family.

It carries out the reaction orotidine 5'-phosphate + H(+) = UMP + CO2. It functions in the pathway pyrimidine metabolism; UMP biosynthesis via de novo pathway; UMP from orotate: step 2/2. The protein is Orotidine 5'-phosphate decarboxylase (pyrG) of Rhizopus oryzae (Mucormycosis agent).